The sequence spans 232 residues: Putative homeobox protein NANOG2 (232 aa).

Positions 1–10 (MDLPIEDSHD) are enriched in basic and acidic residues. The tract at residues 1–39 (MDLPIEDSHDSSTSPKGKQPTTAEKSATKKEDKVPVKKQ) is disordered. Positions 11 to 25 (SSTSPKGKQPTTAEK) are enriched in polar residues. The segment covering 26–35 (SATKKEDKVP) has biased composition (basic and acidic residues). Tandem repeats lie at residues 123 to 127 (WSNQT), 128 to 132 (WNNSI), 133 to 137 (WSNET), 143 to 147 (WSNHS), 148 to 152 (WNTQT), 153 to 157 (WCTQS), 158 to 162 (WNNQA), and 163 to 167 (WNSPF). The interval 123-167 (WSNQTWNNSIWSNETQNIQSWSNHSWNTQTWCTQSWNNQAWNSPF) is 8 X repeats starting with a Trp in each unit. The tract at residues 123–167 (WSNQTWNNSIWSNETQNIQSWSNHSWNTQTWCTQSWNNQAWNSPF) is sufficient for transactivation activity. The interval 168 to 232 (YNCGEESLQS…YSTNMQPEDV (65 aa)) is sufficient for strong transactivation activity.

This sequence belongs to the Nanog homeobox family.

It localises to the nucleus. Probable transcriptional regulator. This is Putative homeobox protein NANOG2 (NANOGP1) from Pan troglodytes (Chimpanzee).